A 161-amino-acid polypeptide reads, in one-letter code: NADH-quinone oxidoreductase subunit C (161 aa).

Belongs to the complex I 30 kDa subunit family. In terms of assembly, NDH-1 is composed of 14 different subunits. Subunits NuoB, C, D, E, F, and G constitute the peripheral sector of the complex.

The protein resides in the cell inner membrane. The catalysed reaction is a quinone + NADH + 5 H(+)(in) = a quinol + NAD(+) + 4 H(+)(out). In terms of biological role, NDH-1 shuttles electrons from NADH, via FMN and iron-sulfur (Fe-S) centers, to quinones in the respiratory chain. The immediate electron acceptor for the enzyme in this species is believed to be ubiquinone. Couples the redox reaction to proton translocation (for every two electrons transferred, four hydrogen ions are translocated across the cytoplasmic membrane), and thus conserves the redox energy in a proton gradient. The chain is NADH-quinone oxidoreductase subunit C from Citrifermentans bemidjiense (strain ATCC BAA-1014 / DSM 16622 / JCM 12645 / Bem) (Geobacter bemidjiensis).